We begin with the raw amino-acid sequence, 375 residues long: tRNA-specific 2-thiouridylase MnmA (375 aa).

ATP is bound by residues 20–27 (AMSGGVDS) and Leu46. Cys114 serves as the catalytic Nucleophile. An intrachain disulfide couples Cys114 to Cys211. Gly138 contacts ATP. The interaction with tRNA stretch occupies residues 160 to 162 (RDQ). Cys211 (cysteine persulfide intermediate) is an active-site residue.

It belongs to the MnmA/TRMU family.

Its subcellular location is the cytoplasm. The catalysed reaction is S-sulfanyl-L-cysteinyl-[protein] + uridine(34) in tRNA + AH2 + ATP = 2-thiouridine(34) in tRNA + L-cysteinyl-[protein] + A + AMP + diphosphate + H(+). Its function is as follows. Catalyzes the 2-thiolation of uridine at the wobble position (U34) of tRNA, leading to the formation of s(2)U34. In Ruegeria pomeroyi (strain ATCC 700808 / DSM 15171 / DSS-3) (Silicibacter pomeroyi), this protein is tRNA-specific 2-thiouridylase MnmA.